The chain runs to 364 residues: sn-glycerol-3-phosphate import ATP-binding protein UgpC (364 aa).

The ABC transporter domain maps to 4–235 (VVLRNVRKTY…PATTFVASFI (232 aa)). 37 to 44 (GPSGCGKS) contacts ATP.

This sequence belongs to the ABC transporter superfamily. sn-glycerol-3-phosphate importer (TC 3.A.1.1.3) family. As to quaternary structure, the complex is composed of two ATP-binding proteins (UgpC), two transmembrane proteins (UgpA and UgpE) and a solute-binding protein (UgpB).

The protein localises to the cell inner membrane. It catalyses the reaction sn-glycerol 3-phosphate(out) + ATP + H2O = sn-glycerol 3-phosphate(in) + ADP + phosphate + H(+). Functionally, part of the ABC transporter complex UgpBAEC involved in sn-glycerol-3-phosphate (G3P) import. Responsible for energy coupling to the transport system. In Rhodopseudomonas palustris (strain BisB5), this protein is sn-glycerol-3-phosphate import ATP-binding protein UgpC.